Reading from the N-terminus, the 440-residue chain is Transposon Ty1-JR2 Gag polyprotein (440 aa).

Positions 1 to 16 are enriched in low complexity; that stretch reads MESQQLSQHSHISHGS. Disordered regions lie at residues 1–93, 126–173, and 352–440; these read MESQ…MMTQ, PQSQ…RPPP, and GSRN…PETY. Polar residues-rich tracts occupy residues 48–60, 71–93, and 127–152; these read TKAN…TPAS, SPQT…MMTQ, and QSQF…GNTF. The segment covering 153–165 has biased composition (low complexity); sequence TDSSSADSDMTST. The tract at residues 299 to 401 is RNA-binding; it reads NNGIHINNKV…NSKSKTARAH (103 aa). The span at 402–418 shows a compositional bias: low complexity; it reads NVSTSNNSPSTDNDSIS. Position 416 is a phosphoserine (S416). Over residues 419-428 the composition is skewed to polar residues; the sequence is KSTTEPIQLN. Residues 429–440 are compositionally biased toward basic and acidic residues; the sequence is NKHDLHLRPETY.

In terms of assembly, homotrimer.

It localises to the cytoplasm. In terms of biological role, capsid protein (CA) is the structural component of the virus-like particle (VLP), forming the shell that encapsulates the retrotransposons dimeric RNA genome. The particles are assembled from trimer-clustered units and there are holes in the capsid shells that allow for the diffusion of macromolecules. CA also has nucleocapsid-like chaperone activity, promoting primer tRNA(i)-Met annealing to the multipartite primer-binding site (PBS), dimerization of Ty1 RNA and initiation of reverse transcription. In Saccharomyces cerevisiae (strain ATCC 204508 / S288c) (Baker's yeast), this protein is Transposon Ty1-JR2 Gag polyprotein (TY1A-JR2).